Consider the following 958-residue polypeptide: Glycine dehydrogenase (decarboxylating) (958 aa).

Lys708 is subject to N6-(pyridoxal phosphate)lysine.

This sequence belongs to the GcvP family. As to quaternary structure, the glycine cleavage system is composed of four proteins: P, T, L and H. The cofactor is pyridoxal 5'-phosphate.

It carries out the reaction N(6)-[(R)-lipoyl]-L-lysyl-[glycine-cleavage complex H protein] + glycine + H(+) = N(6)-[(R)-S(8)-aminomethyldihydrolipoyl]-L-lysyl-[glycine-cleavage complex H protein] + CO2. Functionally, the glycine cleavage system catalyzes the degradation of glycine. The P protein binds the alpha-amino group of glycine through its pyridoxal phosphate cofactor; CO(2) is released and the remaining methylamine moiety is then transferred to the lipoamide cofactor of the H protein. The chain is Glycine dehydrogenase (decarboxylating) from Proteus mirabilis (strain HI4320).